Here is a 230-residue protein sequence, read N- to C-terminus: MTQLHQLISLLHLASPSLPIGGFSYSQGLEAAIDCGSVHDAASAERWIRDNLLHVQAQCEAPLWLLLHRCWKAGDAAQVRTWNDWFRATRETSELRLETEQMGWSLSRLIAQMEWGAPVLRETLAALSPVCLPTAFTAACVALQVEARDGLAAYCFNWAENQVAAAIKAVPLGQVAGQHMLRRLHCAVLDTVDEATRRADATPPQLSTFSPMLGLLSARHETQYSRLFRS.

This sequence belongs to the UreF family. In terms of assembly, ureD, UreF and UreG form a complex that acts as a GTP-hydrolysis-dependent molecular chaperone, activating the urease apoprotein by helping to assemble the nickel containing metallocenter of UreC. The UreE protein probably delivers the nickel.

Its subcellular location is the cytoplasm. Its function is as follows. Required for maturation of urease via the functional incorporation of the urease nickel metallocenter. In Cupriavidus necator (strain ATCC 17699 / DSM 428 / KCTC 22496 / NCIMB 10442 / H16 / Stanier 337) (Ralstonia eutropha), this protein is Urease accessory protein UreF.